Reading from the N-terminus, the 141-residue chain is Cystatin-S (141 aa).

Residues 1 to 27 form the signal peptide; sequence MAYLLHAQLFLLTTFILVLNMRLCPVL. The short motif at 76 to 80 is the Secondary area of contact element; the sequence is QVVAG. Disulfide bonds link C94/C104 and C118/C138.

The protein belongs to the cystatin family. As to expression, found in saliva, tears, urine and seminal fluid.

The protein localises to the secreted. In terms of biological role, this protein strongly inhibits papain and ficin, partially inhibits stem bromelain and bovine cathepsin C, but does not inhibit porcine cathepsin B or clostripain. Papain is inhibited non-competitively. The protein is Cystatin-S (Cst4) of Rattus norvegicus (Rat).